The primary structure comprises 287 residues: Membrane protein insertase YidC 2 (287 aa).

The first 26 residues, 1 to 26 (MKKKKRFKQKLLIASLVIGLMAVLSG), serve as a signal peptide directing secretion. Cysteine 27 carries N-palmitoyl cysteine lipidation. Residue cysteine 27 is the site of S-diacylglycerol cysteine attachment. 5 helical membrane-spanning segments follow: residues 65–85 (YAVGIIVVTILIRLLIMPLMI), 135–155 (MMGCLPLLIQMPILLGFYQAI), 178–198 (YILPVVAALTTFLSSKISMMG), 207–224 (AMIVYIMPVMILFMGITL), and 228–250 (LALYWIIGNIFTVFQTLLINNPF).

Belongs to the OXA1/ALB3/YidC family. Type 2 subfamily.

Its subcellular location is the cell membrane. Functionally, required for the insertion and/or proper folding and/or complex formation of integral membrane proteins into the membrane. Involved in integration of membrane proteins that insert both dependently and independently of the Sec translocase complex, as well as at least some lipoproteins. The protein is Membrane protein insertase YidC 2 of Listeria monocytogenes serovar 1/2a (strain ATCC BAA-679 / EGD-e).